The sequence spans 195 residues: Protein hunchback (195 aa).

3 disordered regions span residues 16 to 57 (SHHH…SHTN), 64 to 83 (LKQQ…QQPM), and 155 to 195 (LTPP…KYMA). Positions 17–29 (HHHHHHHAHHSHH) are enriched in basic residues. Low complexity-rich tracts occupy residues 33 to 44 (SNSNSNASSPHQ) and 66 to 81 (QQQQ…QQQQ). Positions 176–195 (EPEKEHDLMSNSSEDMKYMA) are enriched in basic and acidic residues.

The protein belongs to the hunchback C2H2-type zinc-finger protein family.

The protein localises to the nucleus. Its function is as follows. Gap class segmentation protein that controls development of head structures. The chain is Protein hunchback (hb) from Drosophila dasycnemia (Fruit fly).